Consider the following 181-residue polypeptide: Anthrone oxygenase encC (181 aa).

Helical transmembrane passes span 1–21 (MASVQGLIKIVAITGGVWLSG), 65–81 (QIAACTSTAFAYLAWCA), 88–108 (LLYGTAACSVMGIVPYTLLFM), and 153–173 (FLAGIRGLLPLAGGILGLFAA).

This sequence belongs to the anthrone oxygenase family. As to expression, endocrocin is specifically produced in conidia.

The protein resides in the membrane. Its function is as follows. Anthrone oxygenase; part of the gene cluster that mediates the biosynthesis of endocrocin, a simple anthraquinone interesting for many biotechnological applications. The pathway begins with the synthesis of atrochrysone thioester by the polyketide synthase (PKS) encA. The atrochrysone carboxyl ACP thioesterase encB then breaks the thioester bond and releases the atrochrysone carboxylic acid from encA. The atrochrysone carboxylic acid is then converted to endocrocin anthrone which is further oxidized into endocrocin by the anthrone oxygenase encC. The exact function of encD has not been identified yet, but it negatively regulates endocrocin production, likely through the modification of endocrocin itself. The polypeptide is Anthrone oxygenase encC (Aspergillus fumigatus (strain ATCC MYA-4609 / CBS 101355 / FGSC A1100 / Af293) (Neosartorya fumigata)).